We begin with the raw amino-acid sequence, 69 residues long: uncharacterized protein (69 aa).

The 56-residue stretch at 5–60 (IREHRKELGLTQEELAERVGVTRQTIIALEKGRYSPSLILAHRIARALGREHIEDI) folds into the HTH cro/C1-type domain. A DNA-binding region (H-T-H motif) is located at residues 16–35 (QEELAERVGVTRQTIIALEK).

This is an uncharacterized protein from Methanothermobacter thermautotrophicus (strain ATCC 29096 / DSM 1053 / JCM 10044 / NBRC 100330 / Delta H) (Methanobacterium thermoautotrophicum).